A 527-amino-acid polypeptide reads, in one-letter code: Catalase (527 aa).

Residues 1–22 (MADNRDPASDQMKHWKEQRAAQ) show a composition bias toward basic and acidic residues. The tract at residues 1–32 (MADNRDPASDQMKHWKEQRAAQKPDILTTGSG) is disordered. Ala-2 is subject to N-acetylalanine. Ser-9 carries the phosphoserine modification. An N6-succinyllysine modification is found at Lys-13. Active-site residues include His-75 and Asn-148. 4 residues coordinate NADP(+): His-194, Ser-201, Arg-203, and Asn-213. Residue Lys-221 is modified to N6-succinyllysine. At Lys-233 the chain carries N6-acetyllysine. NADP(+) is bound by residues Lys-237, Trp-303, and His-305. Residue Tyr-358 participates in heme binding. Ser-417 and Ser-434 each carry phosphoserine. The residue at position 480 (Lys-480) is an N6-acetyllysine; alternate. Lys-480 bears the N6-succinyllysine; alternate mark. An N6-acetyllysine modification is found at Lys-499. Thr-511 carries the phosphothreonine modification. Residue Ser-517 is modified to Phosphoserine. A Microbody targeting signal; atypical motif is present at residues 524 to 527 (KANL).

Belongs to the catalase family. Homotetramer. Interacts (via microbody targeting signal) with PEX5, monomeric form interacts with PEX5, leading to its translocation into peroxisomes. Requires heme as cofactor. NADP(+) is required as a cofactor.

It is found in the peroxisome matrix. It catalyses the reaction 2 H2O2 = O2 + 2 H2O. Functionally, catalyzes the degradation of hydrogen peroxide (H(2)O(2)) generated by peroxisomal oxidases to water and oxygen, thereby protecting cells from the toxic effects of hydrogen peroxide. Promotes growth of cells including T-cells, B-cells, myeloid leukemia cells, melanoma cells, mastocytoma cells and normal and transformed fibroblast cells. In Sus scrofa (Pig), this protein is Catalase (CAT).